The sequence spans 989 residues: Serine-repeat antigen protein 5 (989 aa).

The first 16 residues, 1–16 (MKSYISLFFILCVIFN), serve as a signal peptide directing secretion. Disordered regions lie at residues 26-91 (SQTG…EKQD) and 165-245 (LPSN…RNLQ). 3 stretches are compositionally biased toward low complexity: residues 52 to 87 (QGST…STSS), 167 to 180 (SNGT…STGT), and 191 to 225 (SSSS…SSSS). Position 167 is a phosphoserine (S167). N168 carries an N-linked (GlcNAc...) asparagine glycan. An interaction with PTKL region spans residues 208-245 (SSSSSSSSSSSSSSSSSSESLPANGPDSPTVKPPRNLQ). Residue N310 is glycosylated (N-linked (GlcNAc...) asparagine). The segment at 365-382 (YKYLSEDIVSNFKEIKAE) is interaction with host VTN. A disulfide bond links C437 and C489. T541 is modified (phosphothreonine). 5 disulfide bridges follow: C559-C564, C573-C602, C585-C628, C619-C664, and C747-C801. Residues 571–989 (NNCISNLQVE…TNNECYFCYV (419 aa)) form a thiol-protease-like region. Catalysis depends on residues H754 and N779. A glycan (N-linked (GlcNAc...) asparagine) is linked at N820. Residues 835–878 (KASPEFYHNLYFKNFNVGKKNLFSEKEDNENNKKLGNNYIIFGQ) constitute a propeptide, inhibition peptide. S858 is subject to Phosphoserine.

Belongs to the peptidase C1 family. May interact (via C-terminus) with PTKL (via SAM domain). As to quaternary structure, interacts (via C-terminus) with human VTN (via hemopexin repeat 2); may form heterotetramers of two VTN and SERA5 P47 heterodimers; the interaction may protect merozoites from phagocytosis by host monocytes; VTN glycosylation appears to be dispensable for the interaction. In terms of assembly, monomer. Interacts with kinase CPK1/CDPK1 at the schizont stage. Phosphorylation by CPK1/CDPK1 increases SERA5 protease activity towards a synthetic peptide in vitro. In terms of processing, just prior to merozoite egress from host erythrocytes, proteolytically cleaved into multiple fragments. Cleaved by SUB1 into p47 and p73, p73 is further cleaved by SUB1 into p56 and p18 and p56 is further processed into p50 by an unidentified protease. p47 remains covalently associated with p18 via disulfide bond. p47 can be processed into p25n and p25c by SUB1. p25c and p25n remain associated with p18. Proteolytic processing is essential for merozoite egress from host erythrocytes. The cleavage of the propeptide to produce p50 is necessary for protease activity and to promote merozoite egress.

The protein resides in the parasitophorous vacuole. Its subcellular location is the secreted. The protein localises to the cell membrane. In terms of biological role, plays an essential role during the asexual blood stage development by controlling the kinetics of merozoite egress from host erythrocytes. Specifically, prevents premature rupture of the parasitophorous vacuole and host erythrocyte membranes. May prevent merozoite phagocytosis by host monocytes via interaction with host VTN at the merozoite surface. Plays a role in parasite growth. Functionally, protease activity is controversial. The sequence is that of Serine-repeat antigen protein 5 from Plasmodium falciparum (isolate CDC / Honduras).